Here is a 394-residue protein sequence, read N- to C-terminus: Olfactomedin-like protein 3B (394 aa).

Residues 1 to 18 (MKATIFFLLLTVLAHSRS) form the signal peptide. Positions 29–94 (LENRMLAMEE…RVDRVEREMD (66 aa)) form a coiled coil. The 252-residue stretch at 132–383 (VCVNIISSLK…QILYKLELKK (252 aa)) folds into the Olfactomedin-like domain. A disulfide bridge links cysteine 133 with cysteine 310. Asparagine 169, asparagine 204, and asparagine 233 each carry an N-linked (GlcNAc...) asparagine glycan.

This sequence belongs to the OLFML3 family.

It is found in the secreted. Its function is as follows. Secreted scaffold protein that plays an essential role in dorsoventral patterning during early development. Stabilizes axial formation by restricting chordin (CHRD) activity on the dorsal side. Acts by facilitating the association between the tolloid proteases and their substrate chordin (CHRD), leading to enhance chordin (CHRD) degradation. In Danio rerio (Zebrafish), this protein is Olfactomedin-like protein 3B (olfml3b).